Here is a 188-residue protein sequence, read N- to C-terminus: Ion-translocating oxidoreductase complex subunit B (188 aa).

The interval 1–23 (MIEAAVSMSALGLGLGLLLGVAA) is hydrophobic. A 4Fe-4S domain is found at 29-88 (ESPPILDAIEGILPGTNCGACGYPGCRGLAEAMSEGAAPVTACAPGGRDVALALAAIVET). Residues C46, C49, C54, C71, C113, C116, C119, C123, C143, C146, C149, and C153 each contribute to the [4Fe-4S] cluster site. 4Fe-4S ferredoxin-type domains are found at residues 104 to 133 (TVAF…GANR) and 134 to 163 (QIHT…ARVK).

Belongs to the 4Fe4S bacterial-type ferredoxin family. RnfB subfamily. As to quaternary structure, the complex is composed of six subunits: RnfA, RnfB, RnfC, RnfD, RnfE and RnfG. The cofactor is [4Fe-4S] cluster.

It localises to the cellular chromatophore membrane. In terms of biological role, part of a membrane-bound complex that couples electron transfer with translocation of ions across the membrane. This is Ion-translocating oxidoreductase complex subunit B from Cereibacter sphaeroides (strain ATCC 17029 / ATH 2.4.9) (Rhodobacter sphaeroides).